The sequence spans 1105 residues: MPKRDDIEKVLVIGSGPITIGQAAEFDYSGAQAIKALKSLGYRVVVINSNSATIMTDPEFSDAVYIEPLTIDFLEAVIEKERPDALLPTLGGQTALNLAVELFKKGVLCKYDVELIGVKPDTIEKAEDREQFKTAMKNCGLEVLESRLVSSVTEAMDVVREFGYPVVIRPSFTLGGSGGGIAYNLQELKAIVENGLIESPAHTVLIEKSVIGWKEYELEVMKDHEDNFIVVCSIENFDPMGIHTGDSVTVAPAQTLTDVEYQCMRNAARKALSAIGFDAGGCNIQFAVDTYTGKLVIIEMNPRVSRSSALASKATGYPIAKISALLAVGLRLDEIPNSITEQTTAAFEPSIDYVVVKMPRFQMEKFPGAEQKLGTQMKSVGEVMSIGRTFKEALGKAVRSLELDIAPKLDLRNMREHLANPTSERMSYIFAAFRNSLSVDEVHELTFINKWFLTEIEEIMNFEKVLRKKKPKDFGSLKKAKEFGFSDRELAEIYKVQEEEIRKIRHKLGVTPVYKMVDTCSAEFEAKTPYFYSTYNGMENETIPSKRRKIMVLGSGPNRIGQGIEFDYANVHAVWAFQEEGYEVIMVNSNPETVSTDYDISDKLYFEPLTTEDILEIAKIENPDGIVVSFGGQTPLRIARALEKEGLKILAANYELIDLTESRDRFAKFLKQSGLSVPPFSVARSIKEALRAAELIGFPVLIRPSYVLGGRAMAIVDHKKDLLSYISNASLISPDHPLIIDKFLENAVELDVDVISDGENVWIAGLMEQIEKAGIHSGDSACVLPPVSLSDDLIEKIEHLIYRLIKSLKIIGPANIQLAVKDDKVYVIELNLRASRTIPFVSKAIGIPVAKIAAKTIIGKKLSQLLLRYWPYSTKERLVKYEPARSGVLPTPWPEYYSVKEAIIPFNKFSGVDILLGPEMRSTGEVMGIGDDFAEAFAKAQLSADGISTKSLLVTVNDRDKREIVPLVSYLYDLGFEVFATAGTGKILRSMGIAVKNVFKVGEGKPDVVDLIRQGKIGFIVITQSPNRKTSAEINREAENSFADDERTAGYKIRTAAIQCKVPCITTIEAFRAEVSAIRRLKKSTLSVRSLQDIFYAQQNTLLKK.

Residues 1–402 (MPKRDDIEKV…ALGKAVRSLE (402 aa)) form a carboxyphosphate synthetic domain region. R129, R169, G175, G176, K208, V210, E215, G241, I242, H243, Q285, and E299 together coordinate ATP. The ATP-grasp 1 domain maps to 133–328 (KTAMKNCGLE…IAKISALLAV (196 aa)). Residues Q285, E299, and N301 each coordinate Mg(2+). Positions 285, 299, and 301 each coordinate Mn(2+). Positions 403–542 (LDIAPKLDLR…STYNGMENET (140 aa)) are oligomerization domain. The segment at 543-945 (IPSKRRKIMV…AFAKAQLSAD (403 aa)) is carbamoyl phosphate synthetic domain. Residues 667–858 (AKFLKQSGLS…VAKIAAKTII (192 aa)) form the ATP-grasp 2 domain. The ATP site is built by R703, K742, L744, E749, G774, I775, H776, S777, Q817, and E829. Mg(2+) contacts are provided by Q817, E829, and N831. Q817, E829, and N831 together coordinate Mn(2+). In terms of domain architecture, MGS-like spans 940 to 1101 (AQLSADGIST…QDIFYAQQNT (162 aa)). Residues 946 to 1105 (GISTKSLLVT…YAQQNTLLKK (160 aa)) are allosteric domain.

It belongs to the CarB family. In terms of assembly, composed of two chains; the small (or glutamine) chain promotes the hydrolysis of glutamine to ammonia, which is used by the large (or ammonia) chain to synthesize carbamoyl phosphate. Tetramer of heterodimers (alpha,beta)4. Mg(2+) serves as cofactor. The cofactor is Mn(2+).

The catalysed reaction is hydrogencarbonate + L-glutamine + 2 ATP + H2O = carbamoyl phosphate + L-glutamate + 2 ADP + phosphate + 2 H(+). The enzyme catalyses hydrogencarbonate + NH4(+) + 2 ATP = carbamoyl phosphate + 2 ADP + phosphate + 2 H(+). It functions in the pathway amino-acid biosynthesis; L-arginine biosynthesis; carbamoyl phosphate from bicarbonate: step 1/1. The protein operates within pyrimidine metabolism; UMP biosynthesis via de novo pathway; (S)-dihydroorotate from bicarbonate: step 1/3. Large subunit of the glutamine-dependent carbamoyl phosphate synthetase (CPSase). CPSase catalyzes the formation of carbamoyl phosphate from the ammonia moiety of glutamine, carbonate, and phosphate donated by ATP, constituting the first step of 2 biosynthetic pathways, one leading to arginine and/or urea and the other to pyrimidine nucleotides. The large subunit (synthetase) binds the substrates ammonia (free or transferred from glutamine from the small subunit), hydrogencarbonate and ATP and carries out an ATP-coupled ligase reaction, activating hydrogencarbonate by forming carboxy phosphate which reacts with ammonia to form carbamoyl phosphate. The chain is Carbamoyl phosphate synthase large chain from Pseudothermotoga lettingae (strain ATCC BAA-301 / DSM 14385 / NBRC 107922 / TMO) (Thermotoga lettingae).